The chain runs to 145 residues: Large ribosomal subunit protein uL15 (145 aa).

The disordered stretch occupies residues 23 to 51 (IGSGWGKTGGRGHKGQKSRSGGKIRKSFE). Over residues 32 to 47 (GRGHKGQKSRSGGKIR) the composition is skewed to basic residues.

Belongs to the universal ribosomal protein uL15 family. As to quaternary structure, part of the 50S ribosomal subunit.

Binds to the 23S rRNA. The protein is Large ribosomal subunit protein uL15 of Buchnera aphidicola subsp. Cinara cedri (strain Cc).